The primary structure comprises 529 residues: GTPase Obg (529 aa).

Positions 2–159 (ASFVDRVVLH…SDIVLELKSI (158 aa)) constitute an Obg domain. The OBG-type G domain maps to 160-343 (ADIALVGFPS…LGFAMAEIVK (184 aa)). GTP is bound by residues 166–173 (GFPSAGKS), 191–195 (FTTLI), 212–215 (DVPG), 295–298 (NKVD), and 324–326 (SAT). Mg(2+) contacts are provided by Ser173 and Thr193. The region spanning 363–447 (PRAVNEAGFK…DDGVVFDWEP (85 aa)) is the OCT domain. Positions 466–502 (FADIGDRPTRGQKRDEQQERRDAKAAARAELEAERKA) are enriched in basic and acidic residues. The segment at 466–529 (FADIGDRPTR…ESGLTTENEE (64 aa)) is disordered.

This sequence belongs to the TRAFAC class OBG-HflX-like GTPase superfamily. OBG GTPase family. Monomer. It depends on Mg(2+) as a cofactor.

Its subcellular location is the cytoplasm. An essential GTPase which binds GTP, GDP and possibly (p)ppGpp with moderate affinity, with high nucleotide exchange rates and a fairly low GTP hydrolysis rate. Plays a role in control of the cell cycle, stress response, ribosome biogenesis and in those bacteria that undergo differentiation, in morphogenesis control. The protein is GTPase Obg of Arthrobacter sp. (strain FB24).